Here is a 494-residue protein sequence, read N- to C-terminus: ATP synthase subunit alpha 1 (494 aa).

This sequence belongs to the ATPase alpha/beta chains family. In terms of assembly, F-type ATPases have 2 components, CF(1) - the catalytic core - and CF(0) - the membrane proton channel. CF(1) has five subunits: alpha(3), beta(3), gamma(1), delta(1), epsilon(1). CF(0) has three main subunits: a(1), b(2) and c(9-12). The alpha and beta chains form an alternating ring which encloses part of the gamma chain. CF(1) is attached to CF(0) by a central stalk formed by the gamma and epsilon chains, while a peripheral stalk is formed by the delta and b chains.

The protein localises to the cell inner membrane. The enzyme catalyses ATP + H2O + 4 H(+)(in) = ADP + phosphate + 5 H(+)(out). Functionally, produces ATP from ADP in the presence of a proton gradient across the membrane. The alpha chain is a regulatory subunit. This is ATP synthase subunit alpha 1 from Hahella chejuensis (strain KCTC 2396).